The primary structure comprises 334 residues: Phosphate acyltransferase (334 aa).

The protein belongs to the PlsX family. As to quaternary structure, homodimer. Probably interacts with PlsY.

The protein localises to the cytoplasm. The enzyme catalyses a fatty acyl-[ACP] + phosphate = an acyl phosphate + holo-[ACP]. It participates in lipid metabolism; phospholipid metabolism. Catalyzes the reversible formation of acyl-phosphate (acyl-PO(4)) from acyl-[acyl-carrier-protein] (acyl-ACP). This enzyme utilizes acyl-ACP as fatty acyl donor, but not acyl-CoA. The sequence is that of Phosphate acyltransferase from Clostridium kluyveri (strain NBRC 12016).